Reading from the N-terminus, the 156-residue chain is Ribosome maturation factor RimP (156 aa).

This sequence belongs to the RimP family.

It is found in the cytoplasm. Functionally, required for maturation of 30S ribosomal subunits. In Dictyoglomus turgidum (strain DSM 6724 / Z-1310), this protein is Ribosome maturation factor RimP.